A 142-amino-acid polypeptide reads, in one-letter code: Small ribosomal subunit protein uS12 (142 aa).

Belongs to the universal ribosomal protein uS12 family.

The polypeptide is Small ribosomal subunit protein uS12 (Tetrahymena thermophila).